We begin with the raw amino-acid sequence, 215 residues long: uncharacterized protein (215 aa).

The protein belongs to the thiaminase-2 family.

This is an uncharacterized protein from Haemophilus influenzae (strain ATCC 51907 / DSM 11121 / KW20 / Rd).